The primary structure comprises 383 residues: MAKVGEGDPRWIVENREDGHNVNGWHWSEKDCLPWSKNTIGGLFDKKVIQETDEYTFKISSTPVVSGECTANNRKGKTIFLYELDVKMNWEVVFKPKKVLPPPPTTKSKGAADDIDEEDDDGKPAEPIITQKKTISGEFTVPYISDENGDEAPTVRYTINTTADNDETKQSINMVQSLLKSHGVPFVQSQCQEFIKLLKKEFVSKKQVEQSQQQQTANTTTNTTTTTNTVPKVTSSTVIFNSTPTKKPTTKTLKLKEEFQCSPMDAYDVFVNINKLRAFTQSDCTFENEEGGKFSLYGGSIQGVNKTLSPGSKIVQTWRLDNWSKGVESQVTITFSVDGKPLTNVEIVQTGIPIDEFEKTEEGWKRNILDRIKHTFSYSSKIF.

Disordered regions lie at residues 97 to 126 (KKVLPPPPTTKSKGAADDIDEEDDDGKPAE) and 209 to 228 (EQSQQQQTANTTTNTTTTTN).

This sequence belongs to the AHA1 family. In terms of assembly, interacts with hspD/HSP90.

The protein resides in the cytoplasm. In terms of biological role, co-chaperone that stimulates hspD/HSP90 ATPase activity. The chain is Activator of 90 kDa heat shock protein ATPase homolog (ahsa) from Dictyostelium discoideum (Social amoeba).